The following is a 360-amino-acid chain: Aminomethyltransferase (360 aa).

Belongs to the GcvT family. The glycine cleavage system is composed of four proteins: P, T, L and H.

It catalyses the reaction N(6)-[(R)-S(8)-aminomethyldihydrolipoyl]-L-lysyl-[protein] + (6S)-5,6,7,8-tetrahydrofolate = N(6)-[(R)-dihydrolipoyl]-L-lysyl-[protein] + (6R)-5,10-methylene-5,6,7,8-tetrahydrofolate + NH4(+). Its function is as follows. The glycine cleavage system catalyzes the degradation of glycine. The polypeptide is Aminomethyltransferase (Legionella pneumophila subsp. pneumophila (strain Philadelphia 1 / ATCC 33152 / DSM 7513)).